A 72-amino-acid polypeptide reads, in one-letter code: Translation initiation factor IF-1 (72 aa).

An S1-like domain is found at 1-72; it reads MSKEDVIEMQ…TRGRITWRAK (72 aa).

This sequence belongs to the IF-1 family. Component of the 30S ribosomal translation pre-initiation complex which assembles on the 30S ribosome in the order IF-2 and IF-3, IF-1 and N-formylmethionyl-tRNA(fMet); mRNA recruitment can occur at any time during PIC assembly.

The protein localises to the cytoplasm. In terms of biological role, one of the essential components for the initiation of protein synthesis. Stabilizes the binding of IF-2 and IF-3 on the 30S subunit to which N-formylmethionyl-tRNA(fMet) subsequently binds. Helps modulate mRNA selection, yielding the 30S pre-initiation complex (PIC). Upon addition of the 50S ribosomal subunit IF-1, IF-2 and IF-3 are released leaving the mature 70S translation initiation complex. The chain is Translation initiation factor IF-1 from Clostridium acetobutylicum (strain ATCC 824 / DSM 792 / JCM 1419 / IAM 19013 / LMG 5710 / NBRC 13948 / NRRL B-527 / VKM B-1787 / 2291 / W).